The primary structure comprises 805 residues: Leucine--tRNA ligase (805 aa).

Positions 41–52 match the 'HIGH' region motif; that stretch reads PYPSGAGLHVGH. Positions 577–581 match the 'KMSKS' region motif; that stretch reads KMSKS. Lysine 580 lines the ATP pocket.

Belongs to the class-I aminoacyl-tRNA synthetase family.

It is found in the cytoplasm. The enzyme catalyses tRNA(Leu) + L-leucine + ATP = L-leucyl-tRNA(Leu) + AMP + diphosphate. The protein is Leucine--tRNA ligase of Staphylococcus aureus (strain USA300).